Consider the following 113-residue polypeptide: U11-theraphotoxin-Hhn1s (113 aa).

The N-terminal stretch at 1–21 (MNTVRVTFLLVFVLAVSLGQA) is a signal peptide. A propeptide spanning residues 22-74 (DKDENRMEMQEKTEQGKSYLDFAENLLLQKLEELEAKLLEEDSEESRNSRQKR) is cleaved from the precursor. The segment at 61–83 (EEDSEESRNSRQKRCIGEGVPCD) is disordered. 3 cysteine pairs are disulfide-bonded: C75/C90, C82/C95, and C89/C110.

Belongs to the neurotoxin 14 (magi-1) family. 01 (HNTX-16) subfamily. As to expression, expressed by the venom gland.

Its subcellular location is the secreted. Functionally, probable ion channel inhibitor. The protein is U11-theraphotoxin-Hhn1s of Cyriopagopus hainanus (Chinese bird spider).